The chain runs to 73 residues: Heterin-2 (73 aa).

The first 22 residues, 1–22 (MQYKTFLVIFLAYLLVTEEALA), serve as a signal peptide directing secretion. A propeptide spanning residues 47-73 (KRALKNIFDPYQKNLDLELERLLSQLQ) is cleaved from the precursor.

This sequence belongs to the non-disulfide-bridged peptide (NDBP) superfamily. Medium-length antimicrobial peptide (group 3) family. As to expression, expressed by the venom gland.

The protein localises to the secreted. Its subcellular location is the target cell membrane. In terms of biological role, amphipathic peptide with potent activities against Gram-positive bacteria (MIC=5.6-30.0 uM) and weaker activities against the tested Gram-negative bacteria (MIC=15 uM to &gt;45 uM). It has high hemolytic activity against human erythrocytes. May act by disrupting the integrity of the bacterial cell membrane. The polypeptide is Heterin-2 (Heterometrus spinifer (Asia giant forest scorpion)).